A 379-amino-acid chain; its full sequence is Zinc finger protein 883 (379 aa).

13 C2H2-type zinc fingers span residues Tyr-13–His-35, Tyr-41–His-63, Tyr-69–His-91, Tyr-97–His-119, Tyr-125–His-147, Tyr-153–His-175, Tyr-181–His-203, Tyr-209–His-231, Tyr-237–His-259, Tyr-265–His-287, Tyr-293–His-315, Tyr-321–His-343, and Tyr-349–His-371.

Belongs to the krueppel C2H2-type zinc-finger protein family.

It is found in the nucleus. Its function is as follows. May be involved in transcriptional regulation. The protein is Zinc finger protein 883 (ZNF883) of Homo sapiens (Human).